Reading from the N-terminus, the 298-residue chain is Large ribosomal subunit protein uL18 (298 aa).

The protein belongs to the universal ribosomal protein uL18 family. In terms of assembly, component of the large ribosomal subunit. Mature ribosomes consist of a small (40S) and a large (60S) subunit. The 40S subunit contains about 32 different proteins and 1 molecule of RNA (18S). The 60S subunit contains 45 different proteins and 3 molecules of RNA (25S, 5.8S and 5S).

Its subcellular location is the cytoplasm. Functionally, component of the ribosome, a large ribonucleoprotein complex responsible for the synthesis of proteins in the cell. The small ribosomal subunit (SSU) binds messenger RNAs (mRNAs) and translates the encoded message by selecting cognate aminoacyl-transfer RNA (tRNA) molecules. The large subunit (LSU) contains the ribosomal catalytic site termed the peptidyl transferase center (PTC), which catalyzes the formation of peptide bonds, thereby polymerizing the amino acids delivered by tRNAs into a polypeptide chain. The nascent polypeptides leave the ribosome through a tunnel in the LSU and interact with protein factors that function in enzymatic processing, targeting, and the membrane insertion of nascent chains at the exit of the ribosomal tunnel. This chain is Large ribosomal subunit protein uL18, found in Candida albicans (strain SC5314 / ATCC MYA-2876) (Yeast).